A 154-amino-acid chain; its full sequence is 17.0 kDa class II heat shock protein (154 aa).

One can recognise a sHSP domain in the interval 39–154; the sequence is DARAMAATPA…KPKTIEIKVA (116 aa).

This sequence belongs to the small heat shock protein (HSP20) family.

Its subcellular location is the cytoplasm. This chain is 17.0 kDa class II heat shock protein (HSP18), found in Zea mays (Maize).